The following is a 264-amino-acid chain: Enhancer of mRNA-decapping protein 1 (264 aa).

Disordered regions lie at residues 1–180 (MLAQ…FSTI) and 193–264 (YNNP…LRDY). A compositionally biased stretch (basic residues) spans 63-74 (GKKSTSKPKSKS). The span at 83–92 (NFKLTASPSL) shows a compositional bias: polar residues. The span at 108–118 (PSPPPPPPPST) shows a compositional bias: pro residues. Low complexity-rich tracts occupy residues 119 to 134 (QPST…RTST), 161 to 172 (NGKKPNFFNNNN), and 208 to 226 (NNNN…NSNS). The segment covering 248-264 (FKSNNGSPRQSSGLRDY) has biased composition (polar residues).

This sequence belongs to the EDC family.

It is found in the cytoplasm. In terms of biological role, mRNA-binding protein which stimulates mRNA decapping. The chain is Enhancer of mRNA-decapping protein 1 (EDC1) from Candida albicans (strain SC5314 / ATCC MYA-2876) (Yeast).